Reading from the N-terminus, the 341-residue chain is NADH-quinone oxidoreductase subunit H (341 aa).

8 consecutive transmembrane segments (helical) span residues 16 to 36 (LLII…AVAY), 86 to 106 (VVFV…WAVI), 119 to 139 (VGVL…IMAG), 165 to 185 (IGFI…SDVV), 191 to 211 (MWFI…GLAE), 254 to 274 (GAMT…LGWL), 276 to 296 (IPGL…FLWV), and 315 to 335 (VFLP…TAFG).

It belongs to the complex I subunit 1 family. In terms of assembly, NDH-1 is composed of 14 different subunits. Subunits NuoA, H, J, K, L, M, N constitute the membrane sector of the complex.

It is found in the cell inner membrane. The enzyme catalyses a quinone + NADH + 5 H(+)(in) = a quinol + NAD(+) + 4 H(+)(out). Its function is as follows. NDH-1 shuttles electrons from NADH, via FMN and iron-sulfur (Fe-S) centers, to quinones in the respiratory chain. The immediate electron acceptor for the enzyme in this species is believed to be ubiquinone. Couples the redox reaction to proton translocation (for every two electrons transferred, four hydrogen ions are translocated across the cytoplasmic membrane), and thus conserves the redox energy in a proton gradient. This subunit may bind ubiquinone. The polypeptide is NADH-quinone oxidoreductase subunit H (Paramagnetospirillum magneticum (strain ATCC 700264 / AMB-1) (Magnetospirillum magneticum)).